Here is a 331-residue protein sequence, read N- to C-terminus: Ribosomal RNA small subunit methyltransferase H (331 aa).

Residues 38–40 (GGY), aspartate 56, phenylalanine 83, aspartate 100, and glutamine 107 contribute to the S-adenosyl-L-methionine site. The segment at 308–331 (TDAPAGPVDPQVLGMPLIPKKGRR) is disordered.

The protein belongs to the methyltransferase superfamily. RsmH family.

It localises to the cytoplasm. It catalyses the reaction cytidine(1402) in 16S rRNA + S-adenosyl-L-methionine = N(4)-methylcytidine(1402) in 16S rRNA + S-adenosyl-L-homocysteine + H(+). Specifically methylates the N4 position of cytidine in position 1402 (C1402) of 16S rRNA. The sequence is that of Ribosomal RNA small subunit methyltransferase H from Cereibacter sphaeroides (strain ATCC 17025 / ATH 2.4.3) (Rhodobacter sphaeroides).